Reading from the N-terminus, the 946-residue chain is Multiple C2 and transmembrane domain-containing protein 1 (946 aa).

Disordered stretches follow at residues 28-193 and 205-229; these read QLGV…QKSS and LEPAPPPAEPARRPAEPQSLQKGEE. Residues 31–43 show a composition bias toward gly residues; the sequence is VGKGKGGGGGRAG. The segment covering 87–96 has biased composition (polar residues); the sequence is FSSSQPNLCC. Over residues 143–163 the composition is skewed to low complexity; that stretch reads PGGRSPDSAPSSSASSSLSSS. Residues 169–187 show a composition bias toward basic and acidic residues; sequence RGDRIRDEGTRRGSPEAHL. C2 domains lie at 235–353, 399–516, and 550–671; these read KINP…DVTL, QTQS…KLEL, and HKER…AYVL. Residues D270, D276, D323, D325, D331, D433, D439, D486, D488, D494, D589, D595, D641, D643, and D649 each contribute to the Ca(2+) site. 2 helical membrane-spanning segments follow: residues 758–778 and 861–881; these read FVLFLLVVWNFELYMIPLLLL and PFLSWLAIIALCVFTAILYFI.

This sequence belongs to the MCTP family. Ca(2+) is required as a cofactor. Expressed in the brain and central nervous system (at protein level). Isoform 1 and isoform 2 are expressed in the brain, kidney, liver, heart, lung, skeletal muscle, testis and spleen. Isoform 2 shows a higher expression in the brain, heart and skeletal muscle.

The protein resides in the cytoplasmic vesicle. The protein localises to the secretory vesicle. Its subcellular location is the synaptic vesicle membrane. It localises to the recycling endosome. It is found in the endoplasmic reticulum membrane. Calcium sensor which is essential for the stabilization of normal baseline neurotransmitter release and for the induction and long-term maintenance of presynaptic homeostatic plasticity. Overexpression in cultured neurons significantly inhibits neuronal transferrin endocytosis, secretory vesicle retrieval, cell migration, and oxidative stress from glutamate toxicity. This is Multiple C2 and transmembrane domain-containing protein 1 from Rattus norvegicus (Rat).